A 487-amino-acid chain; its full sequence is Structure-specific endonuclease subunit SLX1 (487 aa).

A GIY-YIG domain is found at 27–109; it reads PFYACYLLRS…QKPELSRHLR (83 aa). The disordered stretch occupies residues 44–69; the sequence is RTYVGSTPDPPRRIRQHNGELKQGAW. The segment at 262 to 328 adopts an SLX1-type zinc-finger fold; that stretch reads CHLCQERIAF…LPYQGLCPNC (67 aa). Residues 359–396 show a composition bias toward basic and acidic residues; sequence KAEKAEKAEKAEKAEKAEKAEKAGRKVRQREMKTKKGD. Disordered regions lie at residues 359–407 and 433–475; these read KAEK…QPES and PARS…SEPE. Residues 397 to 407 show a composition bias toward polar residues; sequence QSNGTVAQPES. A compositionally biased stretch (basic and acidic residues) spans 438-455; the sequence is KSKDVGGEGIRHSTHTDD. The span at 465–475 shows a compositional bias: acidic residues; that stretch reads ETEDESESEPE.

Belongs to the SLX1 family. Forms a heterodimer with SLX4. A divalent metal cation serves as cofactor.

The protein resides in the nucleus. Catalytic subunit of the SLX1-SLX4 structure-specific endonuclease that resolves DNA secondary structures generated during DNA repair and recombination. Has endonuclease activity towards branched DNA substrates, introducing single-strand cuts in duplex DNA close to junctions with ss-DNA. The chain is Structure-specific endonuclease subunit SLX1 from Cryptococcus neoformans var. neoformans serotype D (strain B-3501A) (Filobasidiella neoformans).